We begin with the raw amino-acid sequence, 181 residues long: Inner membrane-spanning protein YciB (181 aa).

A run of 5 helical transmembrane segments spans residues 22 to 42 (IYTA…VTYA), 50 to 70 (MQLI…FLHD), 80 to 100 (IVYC…KPVI), 122 to 142 (WVLF…EMPL), and 148 to 168 (FKVF…GMYV).

Belongs to the YciB family.

The protein resides in the cell inner membrane. In terms of biological role, plays a role in cell envelope biogenesis, maintenance of cell envelope integrity and membrane homeostasis. This chain is Inner membrane-spanning protein YciB, found in Aliivibrio fischeri (strain ATCC 700601 / ES114) (Vibrio fischeri).